Consider the following 443-residue polypeptide: dTDP-4-dehydro-6-deoxy-alpha-D-glucopyranose 2,3-dehydratase (443 aa).

Residues W35, 118 to 122 (TFSNY), S157, W260, R325, 341 to 343 (QCN), 346 to 347 (NL), and 377 to 380 (EGGR) each bind dTDP-4-dehydro-6-deoxy-alpha-D-glucose.

The protein belongs to the hexose 2,3-dehydratase family. As to quaternary structure, homodimer.

It carries out the reaction dTDP-4-dehydro-6-deoxy-alpha-D-glucose = dTDP-3,4-didehydro-2,6-dideoxy-alpha-D-glucose + H2O. Its pathway is antibiotic biosynthesis; granaticin biosynthesis. In terms of biological role, involved in the biosynthesis of the 2,6-deoxysugar, dTDP-L-rhodinose, attached to the benzoisochromane quinone chromophore to produce the aglycone antibiotics granaticin and granaticin B. Catalyzes the removal of the hydroxyl group at position C-2 of the hexose ring of dTDP-4-dehydro-6-deoxy-alpha-D-glucopyranose, and the oxidation of the hydroxyl group at position C-3 to form a carbonyl functionality. The product of the reaction, dTDP-2,6-dideoxy-D-glycero-hex-2-enos-4-ulose, is a highly unstable diketosugar, which spontaneously forms dTDP-3,4-didehydro-2,6-dideoxy-alpha-D-glucose. This is dTDP-4-dehydro-6-deoxy-alpha-D-glucopyranose 2,3-dehydratase from Streptomyces violaceoruber.